The primary structure comprises 118 residues: UPF0102 protein Nwi_0116 (118 aa).

It belongs to the UPF0102 family.

In Nitrobacter winogradskyi (strain ATCC 25391 / DSM 10237 / CIP 104748 / NCIMB 11846 / Nb-255), this protein is UPF0102 protein Nwi_0116.